We begin with the raw amino-acid sequence, 168 residues long: Alpha-amylase/trypsin inhibitor CM3 (168 aa).

Positions 1 to 25 (MACKSSCSLLLLAAVLLSVLAAASA) are cleaved as a signal peptide.

It belongs to the protease inhibitor I6 (cereal trypsin/alpha-amylase inhibitor) family. In terms of assembly, subunit of the tetrameric inhibitor. Post-translationally, five disulfide bonds, which are essential for the inhibitor activity, are probably present. In terms of tissue distribution, developing endosperm.

It localises to the secreted. Its function is as follows. Alpha-amylase/trypsin inhibitor. It could be involved in insect defense mechanisms. The protein is Alpha-amylase/trypsin inhibitor CM3 of Triticum aestivum (Wheat).